Consider the following 379-residue polypeptide: ATP-sensitive inward rectifier potassium channel 10 (379 aa).

Residues 1–61 (MTSVAKVYYS…LKDLWTTFID (61 aa)) lie on the Cytoplasmic side of the membrane. Residue arginine 36 coordinates 1,2-dioctanoyl-sn-glycero-3-phospho-(1D-myo-inositol-4,5-bisphosphate). A helical transmembrane segment spans residues 62 to 88 (MQWRYKLLLFSATFAGTWFLFGVVWYL). At 89–114 (VAVAHGDLLELDPPANHTPCVVQVHT) the chain is on the extracellular side. Cysteines 108 and 140 form a disulfide. Residues 115–131 (LTGAFLFSLESQTTIGY) constitute an intramembrane region (discontinuously helical; Pore-forming). Residues 128–133 (TIGYGF) carry the Selectivity filter motif. The Extracellular segment spans residues 132-140 (GFRYISEEC). Residues 141–166 (PLAIVLLIAQLVLTTILEIFITGTFL) form a helical membrane-spanning segment. Topologically, residues 167-379 (AKIARPKKRA…SALSVRISNV (213 aa)) are cytoplasmic. Residues lysine 168, arginine 171, and lysine 173 each contribute to the 1,2-dioctanoyl-sn-glycero-3-phospho-(1D-myo-inositol-4,5-bisphosphate) site. 210–217 (GCQVTGKL) provides a ligand contact to ATP.

The protein belongs to the inward rectifier-type potassium channel (TC 1.A.2.1) family. KCNJ10 subfamily. As to quaternary structure, homotetramer. In kidney cells, it forms heteromeric channels with Kir5.1/KCNJ16; this interaction is required for KCNJ16 localization to the basolateral membrane. Interacts with MAGI1, alone and possibly as a heteromer with KCNJ16; this interaction may facilitate KCNJ10/KCNJ16 potassium channel expression at the basolateral membrane in kidney cells. Interacts with PATJ. As to expression, expressed in kidney (at protein level). In the nephron, expressed in the distal convoluted tubule, the connecting tubule, the collecting duct and cortical thick ascending limbs.

Its subcellular location is the membrane. The protein resides in the basolateral cell membrane. The catalysed reaction is K(+)(in) = K(+)(out). With respect to regulation, channel activity is strongly regulated by variations of cytosolic pH; channels are activated by alkaline and inhibited by acidic pH values. Inhibited by Ba(2+) and Cs(+). Activated by phosphatidylinositol 4,5 biphosphate (PtdIns(4,5)P2). May be responsible for potassium buffering action of glial cells in the brain. Inward rectifier potassium channels are characterized by a greater tendency to allow potassium to flow into the cell rather than out of it. Their voltage dependence is regulated by the concentration of extracellular potassium; as external potassium is raised, the voltage range of the channel opening shifts to more positive voltages. The inward rectification is mainly due to the blockage of outward current by internal magnesium. Can be blocked by extracellular barium and cesium. In the kidney, together with KCNJ16, mediates basolateral K(+) recycling in distal tubules; this process is critical for Na(+) reabsorption at the tubules. The polypeptide is ATP-sensitive inward rectifier potassium channel 10 (Homo sapiens (Human)).